Reading from the N-terminus, the 883-residue chain is Translation initiation factor IF-2 (883 aa).

Disordered regions lie at residues 1–96 (MVDT…RSGM) and 132–259 (QRRA…RGRL). The segment covering 57–66 (PAEPAAAAPE) has biased composition (low complexity). Positions 72–87 (TPAPPAVSPRQQPRPS) are enriched in pro residues. Residues 132 to 188 (QRRAAQELVDKAEREAAEVRRKAEEERHRHEEETKRKAETEAKKRFGEAEPAKKPAD) show a composition bias toward basic and acidic residues. The span at 191–217 (PASTSTTTTAPRAPVTTTTRPPAVAAE) shows a compositional bias: low complexity. Residues 380 to 551 (PRSPVVTVMG…ALQAELLDLK (172 aa)) enclose the tr-type G domain. The tract at residues 389-396 (GHVDHGKT) is G1. 389 to 396 (GHVDHGKT) is a binding site for GTP. Residues 414-418 (GITQH) are G2. The tract at residues 437–440 (DTPG) is G3. GTP contacts are provided by residues 437 to 441 (DTPGH) and 491 to 494 (NKID). A G4 region spans residues 491 to 494 (NKID). Positions 527-529 (SAK) are G5.

It belongs to the TRAFAC class translation factor GTPase superfamily. Classic translation factor GTPase family. IF-2 subfamily.

It localises to the cytoplasm. Functionally, one of the essential components for the initiation of protein synthesis. Protects formylmethionyl-tRNA from spontaneous hydrolysis and promotes its binding to the 30S ribosomal subunits. Also involved in the hydrolysis of GTP during the formation of the 70S ribosomal complex. The sequence is that of Translation initiation factor IF-2 from Rhodopseudomonas palustris (strain BisB5).